Reading from the N-terminus, the 81-residue chain is WAP four-disulfide core domain protein 13 (81 aa).

A signal peptide spans 1–22 (MRPVSPLQLLLVLSLAPQPVLG). The WAP domain occupies 31 to 74 (YILEPPPCRSEPGACNMFCTQQEECPEPLQCCSAYCGIVCTSNQ). Intrachain disulfides connect Cys-38–Cys-62, Cys-45–Cys-66, Cys-49–Cys-61, and Cys-55–Cys-70.

It localises to the secreted. Its function is as follows. Putative acid-stable proteinase inhibitor. This is WAP four-disulfide core domain protein 13 (Wfdc13) from Mus musculus (Mouse).